The sequence spans 287 residues: Phosphatidylserine decarboxylase proenzyme (287 aa).

Residues aspartate 89, histidine 146, and serine 252 each act as charge relay system; for autoendoproteolytic cleavage activity in the active site. The active-site Schiff-base intermediate with substrate; via pyruvic acid; for decarboxylase activity is the serine 252. At serine 252 the chain carries Pyruvic acid (Ser); by autocatalysis.

This sequence belongs to the phosphatidylserine decarboxylase family. PSD-B subfamily. Prokaryotic type I sub-subfamily. Heterodimer of a large membrane-associated beta subunit and a small pyruvoyl-containing alpha subunit. Pyruvate serves as cofactor. In terms of processing, is synthesized initially as an inactive proenzyme. Formation of the active enzyme involves a self-maturation process in which the active site pyruvoyl group is generated from an internal serine residue via an autocatalytic post-translational modification. Two non-identical subunits are generated from the proenzyme in this reaction, and the pyruvate is formed at the N-terminus of the alpha chain, which is derived from the carboxyl end of the proenzyme. The autoendoproteolytic cleavage occurs by a canonical serine protease mechanism, in which the side chain hydroxyl group of the serine supplies its oxygen atom to form the C-terminus of the beta chain, while the remainder of the serine residue undergoes an oxidative deamination to produce ammonia and the pyruvoyl prosthetic group on the alpha chain. During this reaction, the Ser that is part of the protease active site of the proenzyme becomes the pyruvoyl prosthetic group, which constitutes an essential element of the active site of the mature decarboxylase.

It is found in the cell membrane. It catalyses the reaction a 1,2-diacyl-sn-glycero-3-phospho-L-serine + H(+) = a 1,2-diacyl-sn-glycero-3-phosphoethanolamine + CO2. The protein operates within phospholipid metabolism; phosphatidylethanolamine biosynthesis; phosphatidylethanolamine from CDP-diacylglycerol: step 2/2. Its function is as follows. Catalyzes the formation of phosphatidylethanolamine (PtdEtn) from phosphatidylserine (PtdSer). This is Phosphatidylserine decarboxylase proenzyme from Shewanella woodyi (strain ATCC 51908 / MS32).